We begin with the raw amino-acid sequence, 549 residues long: Chaperonin GroEL 1 (549 aa).

ATP is bound by residues 30–33 (TLGP), lysine 51, 87–91 (DGTTT), glycine 415, 479–481 (NAA), and aspartate 495.

This sequence belongs to the chaperonin (HSP60) family. In terms of assembly, forms a cylinder of 14 subunits composed of two heptameric rings stacked back-to-back. Interacts with the co-chaperonin GroES.

It localises to the cytoplasm. The enzyme catalyses ATP + H2O + a folded polypeptide = ADP + phosphate + an unfolded polypeptide.. Together with its co-chaperonin GroES, plays an essential role in assisting protein folding. The GroEL-GroES system forms a nano-cage that allows encapsulation of the non-native substrate proteins and provides a physical environment optimized to promote and accelerate protein folding. This is Chaperonin GroEL 1 from Azoarcus sp. (strain BH72).